Reading from the N-terminus, the 427-residue chain is Trigger factor (427 aa).

The region spanning 163–248 (GDTVVIDFVG…IHEVKAKEVP (86 aa)) is the PPIase FKBP-type domain.

It belongs to the FKBP-type PPIase family. Tig subfamily.

It localises to the cytoplasm. It carries out the reaction [protein]-peptidylproline (omega=180) = [protein]-peptidylproline (omega=0). In terms of biological role, involved in protein export. Acts as a chaperone by maintaining the newly synthesized protein in an open conformation. Functions as a peptidyl-prolyl cis-trans isomerase. This is Trigger factor from Streptococcus suis (strain 05ZYH33).